We begin with the raw amino-acid sequence, 198 residues long: ATP synthase subunit b (198 aa).

A helical membrane pass occupies residues 49 to 67; the sequence is IWKWANFLILAGGLGYLVG.

Belongs to the ATPase B chain family. As to quaternary structure, F-type ATPases have 2 components, F(1) - the catalytic core - and F(0) - the membrane proton channel. F(1) has five subunits: alpha(3), beta(3), gamma(1), delta(1), epsilon(1). F(0) has three main subunits: a(1), b(2) and c(10-14). The alpha and beta chains form an alternating ring which encloses part of the gamma chain. F(1) is attached to F(0) by a central stalk formed by the gamma and epsilon chains, while a peripheral stalk is formed by the delta and b chains.

Its subcellular location is the cell inner membrane. Functionally, f(1)F(0) ATP synthase produces ATP from ADP in the presence of a proton or sodium gradient. F-type ATPases consist of two structural domains, F(1) containing the extramembraneous catalytic core and F(0) containing the membrane proton channel, linked together by a central stalk and a peripheral stalk. During catalysis, ATP synthesis in the catalytic domain of F(1) is coupled via a rotary mechanism of the central stalk subunits to proton translocation. In terms of biological role, component of the F(0) channel, it forms part of the peripheral stalk, linking F(1) to F(0). The polypeptide is ATP synthase subunit b (Solibacter usitatus (strain Ellin6076)).